Consider the following 347-residue polypeptide: Ribosomal RNA small subunit methyltransferase C (347 aa).

This sequence belongs to the methyltransferase superfamily. RsmC family. In terms of assembly, monomer.

It localises to the cytoplasm. It carries out the reaction guanosine(1207) in 16S rRNA + S-adenosyl-L-methionine = N(2)-methylguanosine(1207) in 16S rRNA + S-adenosyl-L-homocysteine + H(+). In terms of biological role, specifically methylates the guanine in position 1207 of 16S rRNA in the 30S particle. The sequence is that of Ribosomal RNA small subunit methyltransferase C from Shewanella baltica (strain OS185).